A 1074-amino-acid chain; its full sequence is Fibrous sheath CABYR-binding protein (1074 aa).

The interval methionine 1–tyrosine 73 is disordered. Phosphoserine occurs at positions 25, 57, 186, and 275. Disordered regions lie at residues glutamine 272–valine 294 and leucine 317–proline 343. The segment covering proline 274–alanine 290 has biased composition (low complexity). Serine 365 carries the phosphoserine modification. 2 disordered regions span residues valine 437–serine 789 and glycine 818–threonine 982. Low complexity predominate over residues proline 448 to serine 467. A compositionally biased stretch (pro residues) spans valine 528–leucine 544. Over residues glutamate 558–glutamate 575 the composition is skewed to low complexity. Pro residues-rich tracts occupy residues phenylalanine 576–leucine 592 and proline 673–alanine 688. Residues threonine 689–valine 720 show a composition bias toward low complexity. Serine 1020 carries the phosphoserine modification. A disordered region spans residues serine 1026–threonine 1054.

In terms of assembly, interacts with CABYR. Interacts with ROPN1 and ROPN1L; the interaction increases upon spermatozoa capacitation conditions. In terms of processing, phosphorylated by PKA upon spermatozoa capacitation conditions. As to expression, expression is restricted to testis and epididymis, expressed by spermatozoa.

The protein localises to the cell projection. It localises to the cilium. It is found in the flagellum. Functionally, may be involved in the later stages of fibrous sheath biogenesis and spermatozoa capacitation. Inhibits ROPN1 and ROPN1L SUMOylation. Binds calcium. The polypeptide is Fibrous sheath CABYR-binding protein (Mus musculus (Mouse)).